Reading from the N-terminus, the 299-residue chain is Diaminopimelate epimerase (299 aa).

Substrate contacts are provided by N15, Q47, and N67. C76 acts as the Proton donor in catalysis. Substrate-binding positions include 77 to 78 (GN), N163, N197, and 215 to 216 (ER). C224 acts as the Proton acceptor in catalysis. Residue 225 to 226 (GS) participates in substrate binding.

This sequence belongs to the diaminopimelate epimerase family. As to quaternary structure, homodimer.

It localises to the cytoplasm. The catalysed reaction is (2S,6S)-2,6-diaminopimelate = meso-2,6-diaminopimelate. Its pathway is amino-acid biosynthesis; L-lysine biosynthesis via DAP pathway; DL-2,6-diaminopimelate from LL-2,6-diaminopimelate: step 1/1. Functionally, catalyzes the stereoinversion of LL-2,6-diaminopimelate (L,L-DAP) to meso-diaminopimelate (meso-DAP), a precursor of L-lysine and an essential component of the bacterial peptidoglycan. The sequence is that of Diaminopimelate epimerase from Agrobacterium fabrum (strain C58 / ATCC 33970) (Agrobacterium tumefaciens (strain C58)).